The following is a 240-amino-acid chain: Proteasome subunit beta 1 (240 aa).

Positions 1–46 (MRDMTPGPDLSGPQAADEFQSDPYAPEVGELPEQSAQDSEKVNKTG) are cleaved as a propeptide — removed in mature form; by autocatalysis. Residues 1-48 (MRDMTPGPDLSGPQAADEFQSDPYAPEVGELPEQSAQDSEKVNKTGTT) are disordered. The Nucleophile role is filled by T47.

This sequence belongs to the peptidase T1B family. In terms of assembly, the 20S proteasome core is composed of 14 alpha and 14 beta subunits that assemble into four stacked heptameric rings, resulting in a barrel-shaped structure. The two inner rings, each composed of seven catalytic beta subunits, are sandwiched by two outer rings, each composed of seven alpha subunits. The catalytic chamber with the active sites is on the inside of the barrel. Has a gated structure, the ends of the cylinder being occluded by the N-termini of the alpha-subunits. Is capped at one or both ends by the proteasome regulatory ATPase, PAN.

It is found in the cytoplasm. The catalysed reaction is Cleavage of peptide bonds with very broad specificity.. Its activity is regulated as follows. The formation of the proteasomal ATPase PAN-20S proteasome complex, via the docking of the C-termini of PAN into the intersubunit pockets in the alpha-rings, triggers opening of the gate for substrate entry. Interconversion between the open-gate and close-gate conformations leads to a dynamic regulation of the 20S proteasome proteolysis activity. In terms of biological role, component of the proteasome core, a large protease complex with broad specificity involved in protein degradation. The chain is Proteasome subunit beta 1 from Haloarcula marismortui (strain ATCC 43049 / DSM 3752 / JCM 8966 / VKM B-1809) (Halobacterium marismortui).